A 160-amino-acid polypeptide reads, in one-letter code: Cyclic pyranopterin monophosphate synthase (160 aa).

Substrate contacts are provided by residues 75 to 77 and 113 to 114; these read LCH and ME. D128 is an active-site residue.

This sequence belongs to the MoaC family. In terms of assembly, homohexamer; trimer of dimers.

The enzyme catalyses (8S)-3',8-cyclo-7,8-dihydroguanosine 5'-triphosphate = cyclic pyranopterin phosphate + diphosphate. It participates in cofactor biosynthesis; molybdopterin biosynthesis. Catalyzes the conversion of (8S)-3',8-cyclo-7,8-dihydroguanosine 5'-triphosphate to cyclic pyranopterin monophosphate (cPMP). This is Cyclic pyranopterin monophosphate synthase from Sodalis glossinidius (strain morsitans).